The primary structure comprises 122 residues: uncharacterized protein (122 aa).

2 helical membrane-spanning segments follow: residues 36 to 56 and 72 to 92; these read SVRSIIVVNILVFAGILYSQF and AVFLFICPCLLYFYQGIFSTD.

It localises to the membrane. This is an uncharacterized protein from Saccharomyces cerevisiae (strain ATCC 204508 / S288c) (Baker's yeast).